Consider the following 307-residue polypeptide: Dof zinc finger protein DOF5.4 (307 aa).

A Dof-type zinc finger spans residues 51–105; it reads LKCPRCNSLNTKFCYYNNYNLSQPRHFCKNCRRYWTKGGVLRNVPVGGGCRKAKR. Zn(2+)-binding residues include Cys-53, Cys-56, Cys-78, and Cys-81. The interval 96–147 is disordered; the sequence is VGGGCRKAKRSKTKQVPSSSSADKPTTTQDDHHVEEKSSTGSHSSSESSSLT. Residues 109 to 123 show a composition bias toward polar residues; that stretch reads KQVPSSSSADKPTTT. Residues 124-133 show a composition bias toward basic and acidic residues; sequence QDDHHVEEKS. Positions 134-147 are enriched in low complexity; sequence STGSHSSSESSSLT.

Its subcellular location is the nucleus. Its function is as follows. Transcription factor that binds specifically to a 5'-AA[AG]G-3' consensus core sequence. Enhances the DNA binding of OBF transcription factors to OCS elements. This chain is Dof zinc finger protein DOF5.4 (DOF5.4), found in Arabidopsis thaliana (Mouse-ear cress).